Consider the following 375-residue polypeptide: D-alanine--D-alanine ligase (375 aa).

Residues lysine 145–glutamate 348 enclose the ATP-grasp domain. Isoleucine 175–glutamate 230 lines the ATP pocket. 3 residues coordinate Mg(2+): aspartate 302, glutamate 315, and asparagine 317.

Belongs to the D-alanine--D-alanine ligase family. Requires Mg(2+) as cofactor. Mn(2+) serves as cofactor.

The protein resides in the cytoplasm. It catalyses the reaction 2 D-alanine + ATP = D-alanyl-D-alanine + ADP + phosphate + H(+). It functions in the pathway cell wall biogenesis; peptidoglycan biosynthesis. Its function is as follows. Cell wall formation. This is D-alanine--D-alanine ligase from Baumannia cicadellinicola subsp. Homalodisca coagulata.